A 1358-amino-acid polypeptide reads, in one-letter code: DNA-directed RNA polymerase subunit beta (1358 aa).

The protein belongs to the RNA polymerase beta chain family. The RNAP catalytic core consists of 2 alpha, 1 beta, 1 beta' and 1 omega subunit. When a sigma factor is associated with the core the holoenzyme is formed, which can initiate transcription.

The catalysed reaction is RNA(n) + a ribonucleoside 5'-triphosphate = RNA(n+1) + diphosphate. In terms of biological role, DNA-dependent RNA polymerase catalyzes the transcription of DNA into RNA using the four ribonucleoside triphosphates as substrates. This is DNA-directed RNA polymerase subunit beta from Thioalkalivibrio sulfidiphilus (strain HL-EbGR7).